We begin with the raw amino-acid sequence, 638 residues long: Growth hormone receptor (638 aa).

A signal peptide spans 1–18; the sequence is MDLWQLLLTLAVAGSGNA. The Extracellular segment spans residues 19–264; it reads VSGSEATPAI…SPFACEEDFQ (246 aa). 2 cysteine pairs are disulfide-bonded: Cys-56–Cys-66 and Cys-101–Cys-112. N-linked (GlcNAc...) asparagine glycosylation is present at Asn-115. Cys-126 and Cys-140 are disulfide-bonded. In terms of domain architecture, Fibronectin type-III spans 151–254; the sequence is PPIGLNWTLL…EVLYVALPQM (104 aa). N-linked (GlcNAc...) asparagine glycosylation is found at Asn-156, Asn-161, and Asn-200. A WSXWS motif motif is present at residues 240–244; that stretch reads YGEFS. The helical transmembrane segment at 265–288 threads the bilayer; the sequence is FPWFLIIIFGIFGLTMILFLFIFS. Residues 289–638 are Cytoplasmic-facing; that stretch reads KQQRIKMLIL…STDQLNKIMP (350 aa). Positions 294-379 are required for JAK2 binding; it reads KMLILPPVPV…HEKSLNILGA (86 aa). The short motif at 297–305 is the Box 1 motif element; sequence ILPPVPVPK. The UbE motif signature appears at 340 to 349; the sequence is DSWVEFIELD. Ser-341 is subject to Phosphoserine. The span at 429–446 shows a compositional bias: polar residues; the sequence is KNQSNSPSTDTAPNTQQP. The interval 429–448 is disordered; the sequence is KNQSNSPSTDTAPNTQQPGV. Phosphotyrosine occurs at positions 487 and 595.

Belongs to the type I cytokine receptor family. Type 1 subfamily. As to quaternary structure, on growth hormone (GH) binding, forms homodimers and binds JAK2 via a box 1-containing domain. In terms of processing, the soluble form (GHBP) is produced by phorbol ester-promoted proteolytic cleavage at the cell surface (shedding) by ADAM17/TACE. Shedding is inhibited by growth hormone (GH) binding to the receptor probably due to a conformational change in GHR rendering the receptor inaccessible to ADAM17. Post-translationally, on GH binding, phosphorylated on tyrosine residues in the cytoplasmic domain by JAK2. Ubiquitinated by the ECS(SOCS2) complex following ligand-binding and phosphorylation by JAK2, leading to its degradation by the proteasome. Regulation by the ECS(SOCS2) complex acts as a negative feedback loop of growth hormone receptor signaling. Ubiquitination is not sufficient for GHR internalization.

It localises to the cell membrane. It is found in the secreted. Functionally, receptor for pituitary gland growth hormone (GH1) involved in regulating postnatal body growth. On ligand binding, couples to the JAK2/STAT5 pathway. Its function is as follows. The soluble form (GHBP) acts as a reservoir of growth hormone in plasma and may be a modulator/inhibitor of GH signaling. This chain is Growth hormone receptor (GHR), found in Ailuropoda melanoleuca (Giant panda).